A 228-amino-acid polypeptide reads, in one-letter code: Eukaryotic translation initiation factor 4E-1 (228 aa).

2 EIF4G-binding regions span residues 53 to 56 (HLLE) and 63 to 99 (FDTPAAKSKQDDWGSSMRPIYTFSTVEEFWSIYNNIH). Residues 71–76 (KQDDWG), lysine 103, and 121–122 (WE) each bind mRNA. The cysteines at positions 126 and 164 are disulfide-linked. Residues 147-156 (YTLLAMIGEQ) are EIF4G-binding. MRNA contacts are provided by residues 171-176 (RGRAEK) and 216-220 (RKLDR).

This sequence belongs to the eukaryotic initiation factor 4E family. EIF4F is a multi-subunit complex, the composition of which varies with external and internal environmental conditions. It is composed of at least EIF4A, EIF4E and EIF4G. EIF4E is also known to interact with other partners. In higher plants two isoforms of EIF4F have been identified, named isoform EIF4F and isoform EIF(iso)4F. Isoform EIF4F has subunits p220 and p26, whereas isoform EIF(iso)4F has subunits p82 and p28. As to quaternary structure, (Microbial infection) Interacts with potyvirus viral genome-linked protein (VPg); this interaction is possible in susceptible hosts but impaired in resistant plants. According to the redox status, the Cys-126-Cys-164 disulfide bridge may have a role in regulating protein function by affecting its ability to bind capped mRNA.

It is found in the nucleus. It localises to the cytoplasm. Its function is as follows. Component of the protein complex eIF4F, which is involved in the recognition of the mRNA cap, ATP-dependent unwinding of 5'-terminal secondary structure and recruitment of mRNA to the ribosome. Recognizes and binds the 7-methylguanosine-containing mRNA cap during an early step in the initiation of protein synthesis and facilitates ribosome binding by inducing the unwinding of the mRNAs secondary structures. Key component of recessive resistance to potyviruses. In terms of biological role, (Microbial infection) Susceptibility host factor required for viral infection by recruiting viral RNAs to the host ribosomal complex via an interaction with viral genome-linked protein (VPg). Also seems to be involved in virus movement from cell-to-cell. This Pisum sativum (Garden pea) protein is Eukaryotic translation initiation factor 4E-1.